Reading from the N-terminus, the 887-residue chain is Probable alpha/beta-glucosidase agdC (887 aa).

The signal sequence occupies residues 1–17 (MLRSLLLLAPMVGAAVA). N-linked (GlcNAc...) asparagine glycosylation is found at Asn-171, Asn-293, and Asn-373. The active-site Nucleophile is the Asp-422. Glu-425 is an active-site residue. Positions 457 to 483 (PRPLPGFPDDFQPPAASKRSVAKGSKV) are disordered. Asp-571 (proton donor) is an active-site residue. N-linked (GlcNAc...) asparagine glycosylation is found at Asn-747 and Asn-879.

It belongs to the glycosyl hydrolase 31 family.

Its subcellular location is the secreted. It catalyses the reaction Hydrolysis of terminal, non-reducing (1-&gt;4)-linked alpha-D-glucose residues with release of alpha-D-glucose.. The enzyme catalyses Hydrolysis of terminal, non-reducing beta-D-glucosyl residues with release of beta-D-glucose.. Its function is as follows. Glucosidase involved in the degradation of cellulosic biomass. Has both alpha- and beta-glucosidase activity. This chain is Probable alpha/beta-glucosidase agdC (agdC), found in Aspergillus clavatus (strain ATCC 1007 / CBS 513.65 / DSM 816 / NCTC 3887 / NRRL 1 / QM 1276 / 107).